A 585-amino-acid chain; its full sequence is Efflux pump dotC (585 aa).

Basic and acidic residues predominate over residues methionine 1–glutamate 34. The interval methionine 1 to leucine 45 is disordered. Asparagine 10 carries an N-linked (GlcNAc...) asparagine glycan. Residues glutamate 35–alanine 44 are compositionally biased toward acidic residues. A helical membrane pass occupies residues serine 51–leucine 71. An N-linked (GlcNAc...) asparagine glycan is attached at asparagine 91. A run of 13 helical transmembrane segments spans residues alanine 94–tryptophan 114, alanine 132–threonine 152, glycine 158–leucine 178, glycine 186–phenylalanine 206, tryptophan 214–leucine 234, phenylalanine 247–phenylalanine 267, serine 280–valine 300, alanine 323–leucine 343, proline 353–alanine 373, leucine 385–phenylalanine 405, leucine 414–valine 434, threonine 449–tyrosine 471, and serine 524–valine 544. Residues lysine 564 to serine 585 form a disordered region.

It belongs to the major facilitator superfamily. TCR/Tet family.

It localises to the cell membrane. Its subcellular location is the vacuole membrane. Functionally, efflux pump; part of the gene cluster that mediates the biosynthesis of dothistromin (DOTH), a polyketide toxin very similar in structure to the aflatoxin precursor, versicolorin B. One function of dotC may be to transport early-stage dothistromin biosynthetic intermediates from the cytoplasm into vacuoles, thereby affecting the rate of dothistromin production. The protein is Efflux pump dotC of Dothistroma septosporum (Red band needle blight fungus).